Here is a 593-residue protein sequence, read N- to C-terminus: DNA mismatch repair protein MutL (593 aa).

The protein belongs to the DNA mismatch repair MutL/HexB family.

This protein is involved in the repair of mismatches in DNA. It is required for dam-dependent methyl-directed DNA mismatch repair. May act as a 'molecular matchmaker', a protein that promotes the formation of a stable complex between two or more DNA-binding proteins in an ATP-dependent manner without itself being part of a final effector complex. In Leptospira interrogans serogroup Icterohaemorrhagiae serovar copenhageni (strain Fiocruz L1-130), this protein is DNA mismatch repair protein MutL.